The following is a 78-amino-acid chain: Sperm-specific protein Phi-0 (78 aa).

3 stretches are compositionally biased toward basic residues: residues 1-21 (MVARRQTKKARKPAARRRSAA), 31-57 (AASRRRPKSAKKAKPAARRRSSVKPKA), and 64-78 (VRRRSRRIRRASVSK). Positions 1 to 78 (MVARRQTKKA…RRIRRASVSK (78 aa)) are disordered.

It localises to the nucleus. Its subcellular location is the chromosome. Functionally, involved in nuclear basic protein transition: histones are replaced by spermatid specific proteins which are themselves replaced by protamines in late spermatids. In Holothuria tubulosa (Tubular sea cucumber), this protein is Sperm-specific protein Phi-0.